Here is a 402-residue protein sequence, read N- to C-terminus: Phosphoglycerate kinase (402 aa).

Residues 24 to 26 (DFN), Arg-40, 63 to 66 (HFGR), Arg-122, and Arg-155 contribute to the substrate site. Residues Lys-206, Gly-297, Glu-328, and 358-361 (GGDS) contribute to the ATP site.

This sequence belongs to the phosphoglycerate kinase family. As to quaternary structure, monomer.

Its subcellular location is the cytoplasm. The enzyme catalyses (2R)-3-phosphoglycerate + ATP = (2R)-3-phospho-glyceroyl phosphate + ADP. It functions in the pathway carbohydrate degradation; glycolysis; pyruvate from D-glyceraldehyde 3-phosphate: step 2/5. The protein is Phosphoglycerate kinase of Prochlorococcus marinus (strain MIT 9312).